The primary structure comprises 1017 residues: Sodium/potassium-transporting ATPase subunit alpha-2 (1017 aa).

Positions 1–31 are disordered; sequence MDGREYSPAATTSENGGGRRKQKEKELDELK. Residues 1–82 are Cytoplasmic-facing; sequence MDGREYSPAA…NALTPPPTTP (82 aa). An interaction with phosphoinositide-3 kinase region spans residues 77-79; the sequence is PPP. The helical transmembrane segment at 83–103 threads the bilayer; sequence EWVKFCRQLFGGFSILLWIGA. Residues 104 to 126 are Extracellular-facing; it reads ILCFLAYGIQAAMEDEPSNDNLY. A helical membrane pass occupies residues 127–147; the sequence is LGVVLAAVVIVTGCFSYYQEA. The Cytoplasmic segment spans residues 148-283; the sequence is KSSKIMDSFK…VGRTPIAMEI (136 aa). Residues 207 to 228 form a disordered region; that stretch reads KVDNSSLTGESEPQTRSPEFTH. Residues 209 to 224 show a composition bias toward polar residues; the sequence is DNSSLTGESEPQTRSP. Residues 284 to 303 traverse the membrane as a helical segment; it reads EHFIRLITGVAVFLGLSFFI. The Extracellular portion of the chain corresponds to 304 to 315; it reads LSLILGYTWLEA. The helical transmembrane segment at 316–333 threads the bilayer; sequence VIFLIGIIVANVPEGLLA. Topologically, residues 334 to 766 are cytoplasmic; that stretch reads TVTVCLTLTA…EEGRLIFDNL (433 aa). The active-site 4-aspartylphosphate intermediate is the Asp371. Lys502 provides a ligand contact to ATP. Residues Asp711 and Asp715 each contribute to the Mg(2+) site. A helical transmembrane segment spans residues 767-786; sequence KKSIAYTLTSNIPEITPFLL. Residues 787 to 796 are Extracellular-facing; the sequence is FIIANIPLPL. The chain crosses the membrane as a helical span at residues 797-817; that stretch reads GTVTILCIDLGTDMVPAISLA. At 818–837 the chain is on the cytoplasmic side; sequence YEAAESDIMKRQPRNPRTDK. A helical membrane pass occupies residues 838–860; the sequence is LVNERLISMAYGQIGMIQALGGF. Residues 861-912 are Extracellular-facing; sequence FTYFVILAENGFLPARLLGVRLAWDDRSTNDLEDSYGQEWTYEQRKVVEFTC. A helical membrane pass occupies residues 913-932; the sequence is HTAFFASIVVVQWADLIICK. At 933-945 the chain is on the cytoplasmic side; the sequence is TRRNSVFQQGMKN. A Phosphoserine; by PKA modification is found at Ser937. A helical membrane pass occupies residues 946 to 964; it reads KILIFGLLEETALAAFLSY. Residues 965 to 979 are Extracellular-facing; sequence CPGMGVALRMYPLKV. A helical membrane pass occupies residues 980 to 1000; the sequence is TWWFCAFPYSLLIFAYDEVRK. At 1001-1017 the chain is on the cytoplasmic side; it reads LILRRYPGGWVEKETYY.

This sequence belongs to the cation transport ATPase (P-type) (TC 3.A.3) family. Type IIC subfamily. As to quaternary structure, the sodium/potassium-transporting ATPase is composed of a catalytic alpha subunit, an auxiliary non-catalytic beta subunit and an additional regulatory subunit.

The protein resides in the membrane. It is found in the cell membrane. The enzyme catalyses K(+)(out) + Na(+)(in) + ATP + H2O = K(+)(in) + Na(+)(out) + ADP + phosphate + H(+). In terms of biological role, this is the catalytic component of the active enzyme, which catalyzes the hydrolysis of ATP coupled with the exchange of sodium and potassium ions across the plasma membrane. This action creates the electrochemical gradient of sodium and potassium ions, providing the energy for active transport of various nutrients. This chain is Sodium/potassium-transporting ATPase subunit alpha-2 (ATP1A2), found in Gallus gallus (Chicken).